A 295-amino-acid chain; its full sequence is MKQDAGLGFRLWVESVVSRVLPGADVSEVLLPDTATKIYVFCVDGRVLFNLSDLVDILKCFGVCADSSQICEYMRSTGRVERLEQLKDLFGEEGLEVVCSSVFSDKLLQEIGSSIRSAKGPECFKDAGPELSHPRFSIGEYKFGCQREGRDGFHNVNELYPFNHQWTDSIMDGILKNIYTSDGKRMEDGCTGKERPAFIKAGSRGRHMKHSGSLKDRPFVCTYNDCKRAFKRYEHLKRHNLMHTGERPHKCRFPGCSKAFSRSDNLSQHYKVHSTTNEMHTRSYGSYRYLNKEFN.

C2H2-type zinc fingers lie at residues 219 to 243 (FVCT…NLMH) and 249 to 273 (HKCR…YKVH).

This is Zinc finger C2H2 protein ECU08_0560 from Encephalitozoon cuniculi (strain GB-M1) (Microsporidian parasite).